The sequence spans 490 residues: Aspartyl/glutamyl-tRNA(Asn/Gln) amidotransferase subunit B (490 aa).

This sequence belongs to the GatB/GatE family. GatB subfamily. As to quaternary structure, heterotrimer of A, B and C subunits.

The catalysed reaction is L-glutamyl-tRNA(Gln) + L-glutamine + ATP + H2O = L-glutaminyl-tRNA(Gln) + L-glutamate + ADP + phosphate + H(+). It catalyses the reaction L-aspartyl-tRNA(Asn) + L-glutamine + ATP + H2O = L-asparaginyl-tRNA(Asn) + L-glutamate + ADP + phosphate + 2 H(+). Allows the formation of correctly charged Asn-tRNA(Asn) or Gln-tRNA(Gln) through the transamidation of misacylated Asp-tRNA(Asn) or Glu-tRNA(Gln) in organisms which lack either or both of asparaginyl-tRNA or glutaminyl-tRNA synthetases. The reaction takes place in the presence of glutamine and ATP through an activated phospho-Asp-tRNA(Asn) or phospho-Glu-tRNA(Gln). In Methylorubrum extorquens (strain PA1) (Methylobacterium extorquens), this protein is Aspartyl/glutamyl-tRNA(Asn/Gln) amidotransferase subunit B.